The primary structure comprises 359 residues: 3-dehydroquinate synthase (359 aa).

NAD(+) is bound by residues 106-110, 130-131, lysine 143, and lysine 152; these read GVVGD and TS. The Zn(2+) site is built by glutamate 185, histidine 246, and histidine 262.

This sequence belongs to the sugar phosphate cyclases superfamily. Dehydroquinate synthase family. The cofactor is NAD(+). Co(2+) serves as cofactor. Requires Zn(2+) as cofactor.

It is found in the cytoplasm. It catalyses the reaction 7-phospho-2-dehydro-3-deoxy-D-arabino-heptonate = 3-dehydroquinate + phosphate. The protein operates within metabolic intermediate biosynthesis; chorismate biosynthesis; chorismate from D-erythrose 4-phosphate and phosphoenolpyruvate: step 2/7. Its function is as follows. Catalyzes the conversion of 3-deoxy-D-arabino-heptulosonate 7-phosphate (DAHP) to dehydroquinate (DHQ). The sequence is that of 3-dehydroquinate synthase from Lactiplantibacillus plantarum (strain ATCC BAA-793 / NCIMB 8826 / WCFS1) (Lactobacillus plantarum).